A 215-amino-acid polypeptide reads, in one-letter code: Ceramide-1-phosphate transfer protein (215 aa).

Residues Asp-57, Lys-61, Arg-107, Arg-111, and His-151 each coordinate an N-acylsphingoid base 1-phosphate.

The protein belongs to the GLTP family.

The protein resides in the cytoplasm. It is found in the cytosol. The protein localises to the golgi apparatus. It localises to the trans-Golgi network membrane. Its subcellular location is the cell membrane. The protein resides in the endosome membrane. It is found in the nucleus outer membrane. It catalyses the reaction N-(hexadecanoyl)-sphing-4-enine-1-phosphate(in) = N-(hexadecanoyl)-sphing-4-enine-1-phosphate(out). The enzyme catalyses N-(9Z-octadecenoyl)-sphing-4-enine-1-phosphate(in) = N-(9Z-octadecenoyl)-sphing-4-enine-1-phosphate(out). Functionally, mediates the intracellular transfer of ceramide-1-phosphate (C1P) between organelle membranes and the cell membrane. Required for normal structure of the Golgi stacks. Can bind phosphoceramides with a variety of aliphatic chains, but has a preference for lipids with saturated C16:0 or monounsaturated C18:1 aliphatic chains, and is inefficient with phosphoceramides containing lignoceryl (C24:0). Plays a role in the regulation of the cellular levels of ceramide-1-phosphate, and thereby contributes to the regulation of phospholipase PLA2G4A activity and the release of arachidonic acid. Has no activity with galactosylceramide, lactosylceramide, sphingomyelin, phosphatidylcholine, phosphatidic acid and ceramide. C1P transfer is stimulated by phosphatidylserine in C1P source vesicles. Regulates autophagy and pyroptosis, but not apoptosis. This Xenopus laevis (African clawed frog) protein is Ceramide-1-phosphate transfer protein (cptp).